A 557-amino-acid polypeptide reads, in one-letter code: Polypyrimidine tract-binding protein 1 (557 aa).

At Met1 the chain carries N-acetylmethionine. Ser16 carries the post-translational modification Phosphoserine. 3 RRM domains span residues 59 to 143 (RVIH…SSPN), 184 to 260 (LRII…FSKL), and 363 to 437 (SVLL…LSKH). Lys65 is covalently cross-linked (Glycyl lysine isopeptide (Lys-Gly) (interchain with G-Cter in SUMO2)). Phosphotyrosine is present on Tyr127. Phosphothreonine is present on Thr138. Residue Ser141 is modified to Phosphoserine. Lys218 is covalently cross-linked (Glycyl lysine isopeptide (Lys-Gly) (interchain with G-Cter in SUMO2)). Ser459 carries the phosphoserine modification. Residues 480 to 555 (ATLHLSNIPP…HHLRVSFSKS (76 aa)) form the RRM 4 domain.

In terms of assembly, monomer. Part of a ternary complex containing KHSRP, PTBP1, PTBP2 and HNRPH1. Interacts with RAVER1 and SFPQ. Interacts with IVNS1ABP (via BACK domain); the interaction is direct.

The protein localises to the nucleus. In terms of biological role, plays a role in pre-mRNA splicing and in the regulation of alternative splicing events. Activates exon skipping of its own pre-mRNA during muscle cell differentiation. Binds to the polypyrimidine tract of introns. May promote RNA looping when bound to two separate polypyrimidine tracts in the same pre-mRNA. May promote the binding of U2 snRNP to pre-mRNA. Cooperates with RAVER1 to modulate switching between mutually exclusive exons during maturation of the TPM1 pre-mRNA. Represses the splicing of MAPT/Tau exon 10. Binds to polypyrimidine-rich controlling element (PCE) of CFTR and promotes exon skipping of CFTR exon 9, thereby antagonizing TIA1 and its role in exon inclusion of CFTR exon 9. Plays a role in the splicing of pyruvate kinase PKM by binding repressively to a polypyrimidine tract flanking PKM exon 9, inhibiting exon 9 inclusion and resulting in exon 10 inclusion and production of the PKM M2 isoform. In case of infection by picornaviruses, binds to the viral internal ribosome entry site (IRES) and stimulates the IRES-mediated translation. The protein is Polypyrimidine tract-binding protein 1 (PTBP1) of Homo sapiens (Human).